Reading from the N-terminus, the 186-residue chain is Large ribosomal subunit protein uL22 (186 aa).

S158 is modified (phosphoserine). A disordered region spans residues 159–186; the sequence is KATDDEPAKKKLSKKKLQRQKEKMLRSE. The residue at position 161 (T161) is a Phosphothreonine. Basic and acidic residues predominate over residues 177-186; the sequence is RQKEKMLRSE.

Belongs to the universal ribosomal protein uL22 family.

The polypeptide is Large ribosomal subunit protein uL22 (RpL17) (Drosophila melanogaster (Fruit fly)).